The following is a 350-amino-acid chain: tRNA uridine(34) hydroxylase (350 aa).

Residues 128–221 (EETDYVMIDT…YMKEYPNDQF (94 aa)) enclose the Rhodanese domain. The active-site Cysteine persulfide intermediate is the cysteine 181.

The protein belongs to the TrhO family.

The enzyme catalyses uridine(34) in tRNA + AH2 + O2 = 5-hydroxyuridine(34) in tRNA + A + H2O. In terms of biological role, catalyzes oxygen-dependent 5-hydroxyuridine (ho5U) modification at position 34 in tRNAs. The chain is tRNA uridine(34) hydroxylase from Bdellovibrio bacteriovorus (strain ATCC 15356 / DSM 50701 / NCIMB 9529 / HD100).